We begin with the raw amino-acid sequence, 533 residues long: 2-isopropylmalate synthase (533 aa).

The 262-residue stretch at Ile8–Ala269 folds into the Pyruvate carboxyltransferase domain. Residues Asp17, His208, His210, and Asn244 each contribute to the Mn(2+) site. Positions Arg408 to Leu533 are regulatory domain.

Belongs to the alpha-IPM synthase/homocitrate synthase family. LeuA type 1 subfamily. Homodimer. Mn(2+) serves as cofactor.

It localises to the cytoplasm. The enzyme catalyses 3-methyl-2-oxobutanoate + acetyl-CoA + H2O = (2S)-2-isopropylmalate + CoA + H(+). The protein operates within amino-acid biosynthesis; L-leucine biosynthesis; L-leucine from 3-methyl-2-oxobutanoate: step 1/4. Functionally, catalyzes the condensation of the acetyl group of acetyl-CoA with 3-methyl-2-oxobutanoate (2-ketoisovalerate) to form 3-carboxy-3-hydroxy-4-methylpentanoate (2-isopropylmalate). The polypeptide is 2-isopropylmalate synthase (Picosynechococcus sp. (strain ATCC 27264 / PCC 7002 / PR-6) (Agmenellum quadruplicatum)).